Here is a 420-residue protein sequence, read N- to C-terminus: 3-phosphoshikimate 1-carboxyvinyltransferase (420 aa).

3-phosphoshikimate contacts are provided by K20, S21, and R25. K20 is a phosphoenolpyruvate binding site. Phosphoenolpyruvate-binding residues include G90 and R118. 3-phosphoshikimate contacts are provided by S159, S160, Q161, S187, D303, and K330. Q161 is a binding site for phosphoenolpyruvate. The active-site Proton acceptor is the D303. 3 residues coordinate phosphoenolpyruvate: R334, R376, and K402.

It belongs to the EPSP synthase family. As to quaternary structure, monomer.

Its subcellular location is the cytoplasm. The enzyme catalyses 3-phosphoshikimate + phosphoenolpyruvate = 5-O-(1-carboxyvinyl)-3-phosphoshikimate + phosphate. Its pathway is metabolic intermediate biosynthesis; chorismate biosynthesis; chorismate from D-erythrose 4-phosphate and phosphoenolpyruvate: step 6/7. In terms of biological role, catalyzes the transfer of the enolpyruvyl moiety of phosphoenolpyruvate (PEP) to the 5-hydroxyl of shikimate-3-phosphate (S3P) to produce enolpyruvyl shikimate-3-phosphate and inorganic phosphate. This chain is 3-phosphoshikimate 1-carboxyvinyltransferase, found in Brachyspira hyodysenteriae (strain ATCC 49526 / WA1).